A 416-amino-acid polypeptide reads, in one-letter code: Serine hydroxymethyltransferase (416 aa).

(6S)-5,6,7,8-tetrahydrofolate-binding positions include Leu119 and 123–125 (GHL). Residue Lys228 is modified to N6-(pyridoxal phosphate)lysine. Residue Glu243 participates in (6S)-5,6,7,8-tetrahydrofolate binding.

Belongs to the SHMT family. Homodimer. The cofactor is pyridoxal 5'-phosphate.

The protein localises to the cytoplasm. It catalyses the reaction (6R)-5,10-methylene-5,6,7,8-tetrahydrofolate + glycine + H2O = (6S)-5,6,7,8-tetrahydrofolate + L-serine. It functions in the pathway one-carbon metabolism; tetrahydrofolate interconversion. Its pathway is amino-acid biosynthesis; glycine biosynthesis; glycine from L-serine: step 1/1. Its function is as follows. Catalyzes the reversible interconversion of serine and glycine with tetrahydrofolate (THF) serving as the one-carbon carrier. This reaction serves as the major source of one-carbon groups required for the biosynthesis of purines, thymidylate, methionine, and other important biomolecules. Also exhibits THF-independent aldolase activity toward beta-hydroxyamino acids, producing glycine and aldehydes, via a retro-aldol mechanism. This is Serine hydroxymethyltransferase from Desulforapulum autotrophicum (strain ATCC 43914 / DSM 3382 / VKM B-1955 / HRM2) (Desulfobacterium autotrophicum).